The chain runs to 281 residues: tRNA pseudouridine synthase A (281 aa).

Aspartate 55 (nucleophile) is an active-site residue. Residue tyrosine 110 participates in substrate binding.

Belongs to the tRNA pseudouridine synthase TruA family.

The catalysed reaction is uridine(38/39/40) in tRNA = pseudouridine(38/39/40) in tRNA. Formation of pseudouridine at positions 38, 39 and 40 in the anticodon stem and loop of transfer RNAs. The protein is tRNA pseudouridine synthase A of Methanocorpusculum labreanum (strain ATCC 43576 / DSM 4855 / Z).